A 117-amino-acid polypeptide reads, in one-letter code: Iron-sulfur cluster insertion protein ErpA (117 aa).

The iron-sulfur cluster site is built by Cys45, Cys109, and Cys111.

It belongs to the HesB/IscA family. As to quaternary structure, homodimer. Requires iron-sulfur cluster as cofactor.

In terms of biological role, required for insertion of 4Fe-4S clusters for at least IspG. The chain is Iron-sulfur cluster insertion protein ErpA from Ruthia magnifica subsp. Calyptogena magnifica.